Here is a 311-residue protein sequence, read N- to C-terminus: Pyrimidine-specific ribonucleoside hydrolase RihA (311 aa).

The active site involves His-240.

It belongs to the IUNH family. RihA subfamily.

In terms of biological role, hydrolyzes with equal efficiency cytidine or uridine to ribose and cytosine or uracil, respectively. The polypeptide is Pyrimidine-specific ribonucleoside hydrolase RihA (Escherichia coli O157:H7).